We begin with the raw amino-acid sequence, 449 residues long: tRNA (guanine(37)-N(1))-methyltransferase (449 aa).

Residues histidine 216, 254-255 (DL), 282-283 (DG), and asparagine 345 each bind S-adenosyl-L-methionine.

Belongs to the class I-like SAM-binding methyltransferase superfamily. TRM5/TYW2 family. As to quaternary structure, monomer.

The protein localises to the mitochondrion matrix. It is found in the nucleus. It localises to the cytoplasm. The catalysed reaction is guanosine(37) in tRNA + S-adenosyl-L-methionine = N(1)-methylguanosine(37) in tRNA + S-adenosyl-L-homocysteine + H(+). Functionally, specifically methylates the N1 position of guanosine-37 in various cytoplasmic and mitochondrial tRNAs. Methylation is not dependent on the nature of the nucleoside 5' of the target nucleoside. This is the first step in the biosynthesis of wybutosine (yW), a modified base adjacent to the anticodon of tRNAs and required for accurate decoding. The polypeptide is tRNA (guanine(37)-N(1))-methyltransferase (Candida albicans (strain WO-1) (Yeast)).